A 435-amino-acid polypeptide reads, in one-letter code: F-box/FBD/LRR-repeat protein At5g44980 (435 aa).

The F-box domain occupies 3–49 (RDYISELPDSLLTQILLELRTKDSVKTSVLSKRWRNLWLNVPGLELF). LRR repeat units follow at residues 88–114 (CKGY…YVFM), 138–162 (LHNV…KLEN), 165–190 (HGED…ELIR), 191–217 (PFDI…TLHF), 250–275 (VKNL…DLRM), and 324–349 (MWSS…ILEY). Residues 355–405 (REQVDFTNVPQCLISTLEYVEIKEPNEKSTIKLVNYFLENSAVLKKLTLRF) enclose the FBD domain.

The protein is F-box/FBD/LRR-repeat protein At5g44980 of Arabidopsis thaliana (Mouse-ear cress).